The following is a 157-amino-acid chain: Transmembrane protein 50A (157 aa).

Serine 2 carries the post-translational modification N-acetylserine. Serine 2 carries the phosphoserine modification. 4 helical membrane passes run isoleucine 26–tyrosine 46, threonine 58–valine 78, isoleucine 95–leucine 115, and valine 126–valine 146.

It belongs to the UPF0220 family.

The protein resides in the membrane. The protein is Transmembrane protein 50A (Tmem50a) of Mus musculus (Mouse).